A 1123-amino-acid chain; its full sequence is Eukaryotic translation initiation factor 2-alpha kinase PK4 (1123 aa).

The tract at residues 1–30 (MKKRIRSSYKVGSSNKYHKKNYTDNEKDKK) is disordered. Over residues 21 to 30 (NYTDNEKDKK) the composition is skewed to basic and acidic residues. ATP-binding positions include 245-253 (IGQGGFGSV) and Lys-270. 3 disordered regions span residues 409 to 493 (FYSD…NDEG), 572 to 609 (RNEDDKNGLDGDKNGLDGDKNGLDGDKNGLDGDKNELD), and 742 to 800 (ENDD…DDDI). The segment covering 419 to 428 (KNKENPEKNH) has biased composition (basic and acidic residues). The segment covering 455–477 (HKLKKRKNKKKKSKKKRKSKSKI) has biased composition (basic residues). Tandem repeats lie at residues 576-582 (DKNGLDG), 583-589 (DKNGLDG), 590-596 (DKNGLDG), 597-603 (DKNGLDG), and 604-610 (DKNELDD). The segment at 576–610 (DKNGLDGDKNGLDGDKNGLDGDKNGLDGDKNELDD) is 5 X 7 AA tandem repeat of D-K-N-[GE]-L-D-[GD]. In terms of domain architecture, Protein kinase spans 678–1049 (TNVESINTNG…KIKVLLDPHL (372 aa)). Acidic residues predominate over residues 743–754 (NDDDDDDDDDDN). Asp-886 acts as the Proton acceptor in catalysis. Thr-953 bears the Phosphothreonine mark.

The protein belongs to the protein kinase superfamily. Ser/Thr protein kinase family. GCN2 subfamily. As to quaternary structure, may form oligomers in response to stress; oligomerization may result in catalytic activity. Interacts with BIP; the interaction is disrupted in response to stress. Post-translationally, auto-phosphorylated.

It is found in the endoplasmic reticulum membrane. It carries out the reaction L-seryl-[protein] + ATP = O-phospho-L-seryl-[protein] + ADP + H(+). It catalyses the reaction L-threonyl-[protein] + ATP = O-phospho-L-threonyl-[protein] + ADP + H(+). With respect to regulation, dissociation from BIP and oligomerization, may results autophosphorylation and kinase activity induction. Its function is as follows. During the asexual blood stage, phosphorylates translation factor eIF2alpha in late schizonts resulting in protein translation inhibition. Plays a role in trophozoite differentiation into schizonts. In Plasmodium falciparum, this protein is Eukaryotic translation initiation factor 2-alpha kinase PK4.